The following is a 593-amino-acid chain: SPI-1 type 3 secretion system translocon protein SctE (593 aa).

Coiled coils occupy residues 151–208 (DTAK…ATDA) and 287–314 (EGRQAEMEKKSAEFQEETRKAEETNRIM). A run of 2 helical transmembrane segments spans residues 330–350 (VVAAVFTGGASLALAAVGLAV) and 409–429 (IVGAIVAAIAMVAVIVVVAVV).

Belongs to the SctE/SipB/YopB family. In terms of assembly, the core secretion machinery of the T3SS is composed of approximately 20 different proteins, including cytoplasmic components, a base, an export apparatus and a needle. This subunit is involved in the formation of a pore, called the translocon, in host membrane.

The protein resides in the secreted. It localises to the host membrane. Functionally, component of the type III secretion system 1 (SPI-1 T3SS), also called injectisome, which is used to inject bacterial effector proteins into eukaryotic host cells. SipB/SctE1 and SipC/SctB are inserted into the host membrane where they form a pore and allow the translocation of effector proteins into the cytosol of target cells. This is SPI-1 type 3 secretion system translocon protein SctE from Salmonella dublin.